The sequence spans 197 residues: ATP-dependent Clp protease proteolytic subunit (197 aa).

Serine 98 serves as the catalytic Nucleophile. Residue histidine 123 is part of the active site.

This sequence belongs to the peptidase S14 family. Fourteen ClpP subunits assemble into 2 heptameric rings which stack back to back to give a disk-like structure with a central cavity, resembling the structure of eukaryotic proteasomes. Forms large heterooligomeric complexes consisting of an ATPase component (ClpX, ClpC or ClpE) and a proteolytic component (ClpP).

The protein resides in the cytoplasm. It catalyses the reaction Hydrolysis of proteins to small peptides in the presence of ATP and magnesium. alpha-casein is the usual test substrate. In the absence of ATP, only oligopeptides shorter than five residues are hydrolyzed (such as succinyl-Leu-Tyr-|-NHMec, and Leu-Tyr-Leu-|-Tyr-Trp, in which cleavage of the -Tyr-|-Leu- and -Tyr-|-Trp bonds also occurs).. With respect to regulation, low intrinsic peptidase activity is stimulated by ATP-binding subunits ClpC, ClpE and ClpX. Activity is disregulated by acyldepsipeptides (ADEP) antibiotics, which negate the need for ATP-binding subunits for activation and which makes it into an unregulated protease. Each ClpP subunit binds 1 ADEP molecule, which prevents binding of ClpX. ADEP binding causes conformational shifts that open the gated pore of the ring. Protease activity is inhibited by diisopropylfluoro-phosphate. Protease activity is inhibited by bortezomib, an oncology drug originally designed to work on the human proteasome. Functionally, cleaves peptides in various proteins in a process that requires ATP hydrolysis. Has a limited peptidase activity in the absence of ATP-binding subunits ClpC, ClpE or ClpX. Has a chymotrypsin-like activity. Plays a major role in the degradation of misfolded proteins. ClpXP is involved in the complete degradation of the site-2 clipped anti-sigma-W factor RsiW. This results in the release of SigW and the transcriptional activation of genes under the control of the sigma-W factor. Probably the major protease that degrades proteins tagged by trans-translation. The chain is ATP-dependent Clp protease proteolytic subunit from Bacillus subtilis (strain 168).